The sequence spans 946 residues: Protein translocase subunit SecA (946 aa).

Residues Gln89, Gly107–Thr111, and Asp508 each bind ATP. The tract at residues Pro534–Ser569 is disordered. The span at Arg546–Ser569 shows a compositional bias: basic and acidic residues.

The protein belongs to the SecA family. In terms of assembly, monomer and homodimer. Part of the essential Sec protein translocation apparatus which comprises SecA, SecYEG and auxiliary proteins SecDF. Other proteins may also be involved.

It is found in the cell inner membrane. The protein resides in the cellular thylakoid membrane. Its subcellular location is the cytoplasm. The catalysed reaction is ATP + H2O + cellular proteinSide 1 = ADP + phosphate + cellular proteinSide 2.. Part of the Sec protein translocase complex. Interacts with the SecYEG preprotein conducting channel. Has a central role in coupling the hydrolysis of ATP to the transfer of proteins into and across the cell membrane, serving as an ATP-driven molecular motor driving the stepwise translocation of polypeptide chains across the membrane. In terms of biological role, probably participates in protein translocation into and across both the cytoplasmic and thylakoid membranes in cyanobacterial cells. In Prochlorococcus marinus (strain SARG / CCMP1375 / SS120), this protein is Protein translocase subunit SecA.